Reading from the N-terminus, the 420-residue chain is MIOREX complex component 9 (420 aa).

2 helical membrane passes run 125–145 (VYKV…TFIL) and 149–169 (IVVI…FFFF).

Associates with the mitochondrial ribosome.

Its subcellular location is the mitochondrion. The protein localises to the mitochondrion membrane. In terms of biological role, component of MIOREX complexes, large expressome-like assemblies of ribosomes with factors involved in all the steps of post-transcriptional gene expression. This Saccharomyces cerevisiae (strain ATCC 204508 / S288c) (Baker's yeast) protein is MIOREX complex component 9.